The following is a 445-amino-acid chain: tRNA-2-methylthio-N(6)-dimethylallyladenosine synthase (445 aa).

The 118-residue stretch at 4-121 (NKIYIKTWGC…LPNMIQEVKK (118 aa)) folds into the MTTase N-terminal domain. The [4Fe-4S] cluster site is built by C13, C50, C84, C158, C162, and C165. Residues 144-376 (RKPKVTAFVS…QTLIRNNTTM (233 aa)) enclose the Radical SAM core domain. The region spanning 379–442 (QKMLGSIQSV…PNSLRGSYEK (64 aa)) is the TRAM domain.

It belongs to the methylthiotransferase family. MiaB subfamily. Monomer. Requires [4Fe-4S] cluster as cofactor.

The protein localises to the cytoplasm. The catalysed reaction is N(6)-dimethylallyladenosine(37) in tRNA + (sulfur carrier)-SH + AH2 + 2 S-adenosyl-L-methionine = 2-methylsulfanyl-N(6)-dimethylallyladenosine(37) in tRNA + (sulfur carrier)-H + 5'-deoxyadenosine + L-methionine + A + S-adenosyl-L-homocysteine + 2 H(+). Functionally, catalyzes the methylthiolation of N6-(dimethylallyl)adenosine (i(6)A), leading to the formation of 2-methylthio-N6-(dimethylallyl)adenosine (ms(2)i(6)A) at position 37 in tRNAs that read codons beginning with uridine. This is tRNA-2-methylthio-N(6)-dimethylallyladenosine synthase from Buchnera aphidicola subsp. Baizongia pistaciae (strain Bp).